The chain runs to 637 residues: Threonine--tRNA ligase (637 aa).

Positions 1–61 constitute a TGS domain; that stretch reads MIKVTLKDGK…DKDCNLEILT (61 aa). The interval 242–532 is catalytic; the sequence is DHRKIGKELD…LIEHYAGAFP (291 aa). C333, H384, and H509 together coordinate Zn(2+).

This sequence belongs to the class-II aminoacyl-tRNA synthetase family. As to quaternary structure, homodimer. Requires Zn(2+) as cofactor.

It localises to the cytoplasm. It catalyses the reaction tRNA(Thr) + L-threonine + ATP = L-threonyl-tRNA(Thr) + AMP + diphosphate + H(+). Catalyzes the attachment of threonine to tRNA(Thr) in a two-step reaction: L-threonine is first activated by ATP to form Thr-AMP and then transferred to the acceptor end of tRNA(Thr). Also edits incorrectly charged L-seryl-tRNA(Thr). The polypeptide is Threonine--tRNA ligase (Clostridium acetobutylicum (strain ATCC 824 / DSM 792 / JCM 1419 / IAM 19013 / LMG 5710 / NBRC 13948 / NRRL B-527 / VKM B-1787 / 2291 / W)).